Consider the following 115-residue polypeptide: Aspartate 1-decarboxylase (115 aa).

The active-site Schiff-base intermediate with substrate; via pyruvic acid is Ser25. The residue at position 25 (Ser25) is a Pyruvic acid (Ser). Thr57 contributes to the substrate binding site. Catalysis depends on Tyr58, which acts as the Proton donor. 71 to 73 (GAA) provides a ligand contact to substrate.

Belongs to the PanD family. In terms of assembly, heterooctamer of four alpha and four beta subunits. Requires pyruvate as cofactor. Is synthesized initially as an inactive proenzyme, which is activated by self-cleavage at a specific serine bond to produce a beta-subunit with a hydroxyl group at its C-terminus and an alpha-subunit with a pyruvoyl group at its N-terminus.

The protein resides in the cytoplasm. It catalyses the reaction L-aspartate + H(+) = beta-alanine + CO2. Its pathway is cofactor biosynthesis; (R)-pantothenate biosynthesis; beta-alanine from L-aspartate: step 1/1. Its function is as follows. Catalyzes the pyruvoyl-dependent decarboxylation of aspartate to produce beta-alanine. This Campylobacter curvus (strain 525.92) protein is Aspartate 1-decarboxylase.